The chain runs to 563 residues: Arginine--tRNA ligase (563 aa).

The 'HIGH' region motif lies at P121–H131.

Belongs to the class-I aminoacyl-tRNA synthetase family. In terms of assembly, monomer.

It is found in the cytoplasm. The enzyme catalyses tRNA(Arg) + L-arginine + ATP = L-arginyl-tRNA(Arg) + AMP + diphosphate. The sequence is that of Arginine--tRNA ligase from Leuconostoc citreum (strain KM20).